We begin with the raw amino-acid sequence, 285 residues long: Transmembrane protein 53-A (285 aa).

Residues 165–185 (FLALAAFAILVIILRILLYPL) form a helical membrane-spanning segment.

This sequence belongs to the TMEM53 family.

The protein localises to the nucleus outer membrane. Its function is as follows. Ensures normal bone formation, through the negative regulation of bone morphogenetic protein (BMP) signaling in osteoblast lineage cells by blocking cytoplasm-nucleus translocation of phosphorylated SMAD proteins. The chain is Transmembrane protein 53-A (tmem53-a) from Xenopus laevis (African clawed frog).